The following is a 288-amino-acid chain: Diaminopimelate epimerase (288 aa).

Substrate is bound by residues Asn-14 and Asn-67. The active-site Proton donor is Cys-76. Residues 77–78, Asn-166, Asn-199, and 217–218 contribute to the substrate site; these read GN and ER. Cys-226 acts as the Proton acceptor in catalysis. 227-228 provides a ligand contact to substrate; the sequence is GT.

Belongs to the diaminopimelate epimerase family. In terms of assembly, homodimer.

The protein localises to the cytoplasm. The enzyme catalyses (2S,6S)-2,6-diaminopimelate = meso-2,6-diaminopimelate. It functions in the pathway amino-acid biosynthesis; L-lysine biosynthesis via DAP pathway; DL-2,6-diaminopimelate from LL-2,6-diaminopimelate: step 1/1. Its function is as follows. Catalyzes the stereoinversion of LL-2,6-diaminopimelate (L,L-DAP) to meso-diaminopimelate (meso-DAP), a precursor of L-lysine and an essential component of the bacterial peptidoglycan. In Bacillus cereus (strain AH820), this protein is Diaminopimelate epimerase.